The following is a 208-amino-acid chain: Transmembrane protein 160 (208 aa).

A mitochondrion-targeting transit peptide spans 1–45 (MASIRWLMGSRLSRFVCPFAQLVRQPVLRYVRPPVRALHRGSVRR). The next 3 membrane-spanning stretches (helical) occupy residues 82 to 102 (GFLS…IAFV), 110 to 130 (AGYA…ASYV), and 147 to 167 (VLLH…AVSL). Positions 181-192 (DDEEHGADESSE) are enriched in acidic residues. The segment at 181 to 208 (DDEEHGADESSECAECRARRDREKGQDK) is disordered. Residues 194-208 (AECRARRDREKGQDK) show a composition bias toward basic and acidic residues.

It belongs to the TMEM160 family.

It is found in the mitochondrion inner membrane. This Danio rerio (Zebrafish) protein is Transmembrane protein 160.